The sequence spans 290 residues: Porphobilinogen deaminase (290 aa).

The residue at position 237 (C237) is an S-(dipyrrolylmethanemethyl)cysteine.

Belongs to the HMBS family. In terms of assembly, monomer. It depends on dipyrromethane as a cofactor.

The catalysed reaction is 4 porphobilinogen + H2O = hydroxymethylbilane + 4 NH4(+). Its pathway is porphyrin-containing compound metabolism; protoporphyrin-IX biosynthesis; coproporphyrinogen-III from 5-aminolevulinate: step 2/4. In terms of biological role, tetrapolymerization of the monopyrrole PBG into the hydroxymethylbilane pre-uroporphyrinogen in several discrete steps. The polypeptide is Porphobilinogen deaminase (Clostridium botulinum (strain Langeland / NCTC 10281 / Type F)).